Reading from the N-terminus, the 321-residue chain is Ferredoxin--NADP reductase (321 aa).

Positions 28, 36, 41, 81, 115, 274, and 315 each coordinate FAD.

It belongs to the ferredoxin--NADP reductase type 2 family. In terms of assembly, homodimer. FAD is required as a cofactor.

The catalysed reaction is 2 reduced [2Fe-2S]-[ferredoxin] + NADP(+) + H(+) = 2 oxidized [2Fe-2S]-[ferredoxin] + NADPH. This is Ferredoxin--NADP reductase from Frankia casuarinae (strain DSM 45818 / CECT 9043 / HFP020203 / CcI3).